The chain runs to 72 residues: ATP synthase subunit c (72 aa).

2 helical membrane-spanning segments follow: residues 4-24 (ALGAGLAVSIAGIGGGIGMGI) and 46-66 (LLFITLAFIETLTIYGLLIAF).

This sequence belongs to the ATPase C chain family. F-type ATPases have 2 components, F(1) - the catalytic core - and F(0) - the membrane proton channel. F(1) has five subunits: alpha(3), beta(3), gamma(1), delta(1), epsilon(1). F(0) has three main subunits: a(1), b(2) and c(10-14). The alpha and beta chains form an alternating ring which encloses part of the gamma chain. F(1) is attached to F(0) by a central stalk formed by the gamma and epsilon chains, while a peripheral stalk is formed by the delta and b chains.

It localises to the cell membrane. F(1)F(0) ATP synthase produces ATP from ADP in the presence of a proton or sodium gradient. F-type ATPases consist of two structural domains, F(1) containing the extramembraneous catalytic core and F(0) containing the membrane proton channel, linked together by a central stalk and a peripheral stalk. During catalysis, ATP synthesis in the catalytic domain of F(1) is coupled via a rotary mechanism of the central stalk subunits to proton translocation. Functionally, key component of the F(0) channel; it plays a direct role in translocation across the membrane. A homomeric c-ring of between 10-14 subunits forms the central stalk rotor element with the F(1) delta and epsilon subunits. This Syntrophomonas wolfei subsp. wolfei (strain DSM 2245B / Goettingen) protein is ATP synthase subunit c.